Reading from the N-terminus, the 273-residue chain is Undecaprenyl-diphosphatase (273 aa).

7 helical membrane-spanning segments follow: residues 6–26 (SLLI…LPVS), 45–65 (AKTF…VMFW), 90–110 (LTLI…LVFH), 116–136 (LFNP…LIAA), 190–210 (YAAS…ATVL), 222–242 (ADIP…LIAI), and 252–272 (ISFI…YVVF).

Belongs to the UppP family.

The protein resides in the cell inner membrane. The catalysed reaction is di-trans,octa-cis-undecaprenyl diphosphate + H2O = di-trans,octa-cis-undecaprenyl phosphate + phosphate + H(+). In terms of biological role, catalyzes the dephosphorylation of undecaprenyl diphosphate (UPP). Confers resistance to bacitracin. This chain is Undecaprenyl-diphosphatase, found in Salmonella paratyphi C (strain RKS4594).